Reading from the N-terminus, the 749-residue chain is Protein lin-54 homolog (749 aa).

Lysine 139 is covalently cross-linked (Glycyl lysine isopeptide (Lys-Gly) (interchain with G-Cter in SUMO2)). 2 positions are modified to N6-acetyllysine: lysine 244 and lysine 249. Serine 264, serine 282, serine 310, and serine 314 each carry phosphoserine. Lysine 357 participates in a covalent cross-link: Glycyl lysine isopeptide (Lys-Gly) (interchain with G-Cter in SUMO2). A CRC domain is found at 521–634 (PRKPCNCTKS…KCIGCKNFEE (114 aa)). Residues 523 to 536 (KPCNCTKSLCLKLY) are DNA-binding. Zn(2+) is bound by residues cysteine 525, cysteine 527, cysteine 532, cysteine 537, cysteine 539, cysteine 546, cysteine 549, cysteine 551, and cysteine 554. Residues 583–596 (IGKGKEGESDRRHS) are linker. The Zn(2+) site is built by cysteine 599, cysteine 601, cysteine 606, cysteine 611, cysteine 613, cysteine 620, cysteine 624, cysteine 626, and cysteine 629. The DNA-binding stretch occupies residues 599–612 (CNCKRSGCLKNYCE). A Phosphoserine modification is found at serine 635. Glycyl lysine isopeptide (Lys-Gly) (interchain with G-Cter in SUMO2) cross-links involve residues lysine 639, lysine 659, and lysine 661.

It belongs to the lin-54 family. In terms of assembly, component of the DREAM complex (also named LINC complex) at least composed of E2F4, E2F5, LIN9, LIN37, LIN52, LIN54, MYBL1, MYBL2, RBL1, RBL2, RBBP4, RBL2, TFDP1 and TFDP2. The complex exists in quiescent cells where it represses cell cycle-dependent genes. It dissociates in S phase when LIN9, LIN37, LIN52 and LIN54 form a subcomplex that binds to MYBL2.

The protein localises to the nucleus. Component of the DREAM complex, a multiprotein complex that can both act as a transcription activator or repressor depending on the context. In G0 phase, the complex binds to more than 800 promoters and is required for repression of E2F target genes. In S phase, the complex selectively binds to the promoters of G2/M genes whose products are required for mitosis and participates in their cell cycle dependent activation. In the complex, acts as a DNA-binding protein that binds the promoter of CDK1 in a sequence-specific manner. Specifically recognizes the consensus motif 5'-TTYRAA-3' in target DNA. The chain is Protein lin-54 homolog (Lin54) from Mus musculus (Mouse).